A 162-amino-acid chain; its full sequence is uncharacterized protein (162 aa).

Helical transmembrane passes span A28 to F50, L57 to L76, and Y108 to A130.

It is found in the cell membrane. This is an uncharacterized protein from Treponema pallidum (strain Nichols).